A 635-amino-acid polypeptide reads, in one-letter code: Surface protein F (635 aa).

The first 37 residues, 1 to 37 (MAKYRGKPFQLYVKLSCSTMMATSIILTNILPYDAQA), serve as a signal peptide directing secretion. Composition is skewed to basic and acidic residues over residues 101–112 (NELDSKDNKSSH) and 193–202 (KSKDASKDTS). 2 disordered regions span residues 101 to 122 (NELD…SDID) and 192 to 228 (HKSK…SGHV). The LPXTG sorting signal signature appears at 597 to 601 (LPKAG). The residue at position 600 (Ala-600) is a Pentaglycyl murein peptidoglycan amidated alanine. Residues 601–635 (GETIKEHWLPISVIVGAMGVLMIWLSRRNKLKNKA) constitute a propeptide, removed by sortase.

Its subcellular location is the secreted. The protein resides in the cell wall. This is Surface protein F from Staphylococcus aureus (strain NCTC 8325 / PS 47).